The sequence spans 131 residues: Profilin-7 (131 aa).

Residues C13 and C115 are joined by a disulfide bond. The Involved in PIP2 interaction signature appears at 81–97 (AVIRGKKGAGGITIKKT). Phosphothreonine is present on T111.

The protein belongs to the profilin family. As to quaternary structure, occurs in many kinds of cells as a complex with monomeric actin in a 1:1 ratio. Post-translationally, phosphorylated by MAP kinases.

The protein localises to the cytoplasm. It is found in the cytoskeleton. Functionally, binds to actin and affects the structure of the cytoskeleton. At high concentrations, profilin prevents the polymerization of actin, whereas it enhances it at low concentrations. The protein is Profilin-7 of Olea europaea (Common olive).